A 111-amino-acid polypeptide reads, in one-letter code: Large ribosomal subunit protein uL22 (111 aa).

This sequence belongs to the universal ribosomal protein uL22 family. In terms of assembly, part of the 50S ribosomal subunit.

This protein binds specifically to 23S rRNA; its binding is stimulated by other ribosomal proteins, e.g. L4, L17, and L20. It is important during the early stages of 50S assembly. It makes multiple contacts with different domains of the 23S rRNA in the assembled 50S subunit and ribosome. Functionally, the globular domain of the protein is located near the polypeptide exit tunnel on the outside of the subunit, while an extended beta-hairpin is found that lines the wall of the exit tunnel in the center of the 70S ribosome. In Protochlamydia amoebophila (strain UWE25), this protein is Large ribosomal subunit protein uL22.